A 541-amino-acid polypeptide reads, in one-letter code: Glucose-6-phosphate isomerase (541 aa).

The Proton donor role is filled by glutamate 346. Active-site residues include histidine 377 and lysine 506.

This sequence belongs to the GPI family.

It localises to the cytoplasm. The catalysed reaction is alpha-D-glucose 6-phosphate = beta-D-fructose 6-phosphate. Its pathway is carbohydrate biosynthesis; gluconeogenesis. It participates in carbohydrate degradation; glycolysis; D-glyceraldehyde 3-phosphate and glycerone phosphate from D-glucose: step 2/4. In terms of biological role, catalyzes the reversible isomerization of glucose-6-phosphate to fructose-6-phosphate. The protein is Glucose-6-phosphate isomerase of Rhizobium johnstonii (strain DSM 114642 / LMG 32736 / 3841) (Rhizobium leguminosarum bv. viciae).